Consider the following 272-residue polypeptide: 5'-AMP-activated protein kinase subunit beta-2 (272 aa).

The segment at 1–52 is disordered; the sequence is MGNTTSDRVSGERHGAKAARSEGAGGHAPGKEHKIMVGSTDDPSVFSLPDSK. At Ser39 the chain carries Phosphoserine. Thr40 carries the phosphothreonine modification. Ser69 carries the phosphoserine; by ULK1 modification. Phosphoserine occurs at positions 95 and 108. Thr148 bears the Phosphothreonine mark. 4 positions are modified to phosphoserine: Ser158, Ser170, Ser174, and Ser184.

It belongs to the 5'-AMP-activated protein kinase beta subunit family. AMPK is a heterotrimer of an alpha catalytic subunit (PRKAA1 or PRKAA2), a beta (PRKAB1 or PRKAB2) and a gamma non-catalytic subunits (PRKAG1, PRKAG2 or PRKAG3). In terms of processing, phosphorylated when associated with the catalytic subunit (PRKAA1 or PRKAA2). Phosphorylated by ULK1 and ULK2; leading to negatively regulate AMPK activity and suggesting the existence of a regulatory feedback loop between ULK1, ULK2 and AMPK.

Functionally, non-catalytic subunit of AMP-activated protein kinase (AMPK), an energy sensor protein kinase that plays a key role in regulating cellular energy metabolism. In response to reduction of intracellular ATP levels, AMPK activates energy-producing pathways and inhibits energy-consuming processes: inhibits protein, carbohydrate and lipid biosynthesis, as well as cell growth and proliferation. AMPK acts via direct phosphorylation of metabolic enzymes, and by longer-term effects via phosphorylation of transcription regulators. Also acts as a regulator of cellular polarity by remodeling the actin cytoskeleton; probably by indirectly activating myosin. Beta non-catalytic subunit acts as a scaffold on which the AMPK complex assembles, via its C-terminus that bridges alpha (PRKAA1 or PRKAA2) and gamma subunits (PRKAG1, PRKAG2 or PRKAG3). The chain is 5'-AMP-activated protein kinase subunit beta-2 (PRKAB2) from Homo sapiens (Human).